Reading from the N-terminus, the 323-residue chain is tRNA U34 carboxymethyltransferase (323 aa).

Carboxy-S-adenosyl-L-methionine is bound by residues Lys91, Trp105, Lys110, Gly130, 181-182 (IE), Met196, Tyr200, and Arg315.

This sequence belongs to the class I-like SAM-binding methyltransferase superfamily. CmoB family. As to quaternary structure, homotetramer.

The catalysed reaction is carboxy-S-adenosyl-L-methionine + 5-hydroxyuridine(34) in tRNA = 5-carboxymethoxyuridine(34) in tRNA + S-adenosyl-L-homocysteine + H(+). In terms of biological role, catalyzes carboxymethyl transfer from carboxy-S-adenosyl-L-methionine (Cx-SAM) to 5-hydroxyuridine (ho5U) to form 5-carboxymethoxyuridine (cmo5U) at position 34 in tRNAs. This chain is tRNA U34 carboxymethyltransferase, found in Yersinia pseudotuberculosis serotype IB (strain PB1/+).